A 310-amino-acid chain; its full sequence is Translocator protein BipD (310 aa).

Coiled-coil stretches lie at residues 127–171 (DPIL…LQDY) and 250–299 (DTAR…AIST).

Belongs to the invasin protein D family.

It localises to the secreted. Required for invasion of epithelial cells, as well as for survival within host cells, escape from endocytic vesicles and subsequent actin-tail formation. Probably regulates the secretion of effectors BipB and BipC and their final integration into the target cell membrane. The chain is Translocator protein BipD (bipD) from Burkholderia thailandensis (strain ATCC 700388 / DSM 13276 / CCUG 48851 / CIP 106301 / E264).